A 161-amino-acid polypeptide reads, in one-letter code: SsrA-binding protein (161 aa).

The protein belongs to the SmpB family.

The protein localises to the cytoplasm. Required for rescue of stalled ribosomes mediated by trans-translation. Binds to transfer-messenger RNA (tmRNA), required for stable association of tmRNA with ribosomes. tmRNA and SmpB together mimic tRNA shape, replacing the anticodon stem-loop with SmpB. tmRNA is encoded by the ssrA gene; the 2 termini fold to resemble tRNA(Ala) and it encodes a 'tag peptide', a short internal open reading frame. During trans-translation Ala-aminoacylated tmRNA acts like a tRNA, entering the A-site of stalled ribosomes, displacing the stalled mRNA. The ribosome then switches to translate the ORF on the tmRNA; the nascent peptide is terminated with the 'tag peptide' encoded by the tmRNA and targeted for degradation. The ribosome is freed to recommence translation, which seems to be the essential function of trans-translation. This Haemophilus influenzae (strain 86-028NP) protein is SsrA-binding protein.